A 305-amino-acid polypeptide reads, in one-letter code: Ferredoxin--NADP reductase (305 aa).

Residues E31, Y42, V82, and D274 each contribute to the FAD site.

The protein belongs to the ferredoxin--NADP reductase type 2 family. As to quaternary structure, homodimer. It depends on FAD as a cofactor.

It catalyses the reaction 2 reduced [2Fe-2S]-[ferredoxin] + NADP(+) + H(+) = 2 oxidized [2Fe-2S]-[ferredoxin] + NADPH. The sequence is that of Ferredoxin--NADP reductase from Ignicoccus hospitalis (strain KIN4/I / DSM 18386 / JCM 14125).